The following is a 611-amino-acid chain: MTLDNLKHSAILSTLFKMADDNDLLGASEFIKDRLYFATLRSKPKSTANTHYFSTDEEFVYENFYADFGPLNLAMLYRYCCKLNKKLKSFTLTRKRIVHYTSFDQRKRANAAVLIGAYAVIYLKKTPEEAYRALISGSNASYLPFRDASFGNCTYNLTVLDCLQGIRKALQHGFLNFETFDVNEYEHYERVENGDLNWITPGKLLAFSGPHPKSKVENGYPLHAPEAYFPYFRKHNVTTIVRLNKKIYDAKRFTDAGFDHYDLFFVDGSTPSDIITRRFLHICESTSGAVAVHCKAGLGRTGTLIGCYLMKHYRFTSAEAIAWIRICRPGSIIGPQQHYLEEKQASLWAHGDSLRSKQRQYQDRSVPQLISSMDNLSISTSIFKSHSLDRMEENDYAENDLGMTQGDKLRALKGRRQPRSATTGAIRVEDVKVHTRSPSQPLSRMKPPASSQGSISPLKSSKVPASSSSSSSSSSVSASAKRIGRSSSSSTNLKSTRLASSLGNLYEPNTESISSGKPPSPSSFTPHPVRTTYNYHYEVNNNNNQYSTTSSPSKSLGYNLNHSGPSGASANARLSAGEQGHQRNPPAGLSGLSTRHLSRSIPSLQSEYVQY.

The segment at 23–178 (DLLGASEFIK…ALQHGFLNFE (156 aa)) is a. The linker stretch occupies residues 179–192 (TFDVNEYEHYERVE). The tract at residues 193 to 359 (NGDLNWITPG…HGDSLRSKQR (167 aa)) is b. The Tyrosine-protein phosphatase domain occupies 194-352 (GDLNWITPGK…KQASLWAHGD (159 aa)). Cys-294 serves as the catalytic Phosphocysteine intermediate. A disordered region spans residues 408–611 (KLRALKGRRQ…PSLQSEYVQY (204 aa)). Residues 456–490 (SPLKSSKVPASSSSSSSSSSVSASAKRIGRSSSSS) show a composition bias toward low complexity. The segment covering 491–511 (TNLKSTRLASSLGNLYEPNTE) has biased composition (polar residues). The span at 512–553 (SISSGKPPSPSSFTPHPVRTTYNYHYEVNNNNNQYSTTSSPS) shows a compositional bias: low complexity. 2 stretches are compositionally biased toward polar residues: residues 554-569 (KSLG…SGAS) and 591-611 (GLST…YVQY).

It belongs to the protein-tyrosine phosphatase family. Non-receptor class CDC14 subfamily.

The protein localises to the nucleus. Its subcellular location is the cytoplasm. It is found in the cytoskeleton. It localises to the microtubule organizing center. The protein resides in the centrosome. The protein localises to the spindle pole. Its subcellular location is the spindle. It is found in the cell projection. It localises to the kinocilium. It carries out the reaction O-phospho-L-tyrosyl-[protein] + H2O = L-tyrosyl-[protein] + phosphate. The catalysed reaction is O-phospho-L-seryl-[protein] + H2O = L-seryl-[protein] + phosphate. It catalyses the reaction O-phospho-L-threonyl-[protein] + H2O = L-threonyl-[protein] + phosphate. Functionally, dual-specificity phosphatase. Required for centrosome separation and productive cytokinesis during cell division. Dephosphorylates SIRT2 around early anaphase. May dephosphorylate the APC subunit FZR1/CDH1, thereby promoting APC-FZR1 dependent degradation of mitotic cyclins and subsequent exit from mitosis. This Danio rerio (Zebrafish) protein is Dual specificity protein phosphatase CDC14AB (cdc14ab).